The following is a 108-amino-acid chain: Phosphoribosyl-AMP cyclohydrolase (108 aa).

Aspartate 73 contributes to the Mg(2+) binding site. Residue cysteine 74 participates in Zn(2+) binding. 2 residues coordinate Mg(2+): aspartate 75 and aspartate 77. Residues cysteine 90 and cysteine 97 each coordinate Zn(2+).

It belongs to the PRA-CH family. Homodimer. Mg(2+) is required as a cofactor. Requires Zn(2+) as cofactor.

It localises to the cytoplasm. The enzyme catalyses 1-(5-phospho-beta-D-ribosyl)-5'-AMP + H2O = 1-(5-phospho-beta-D-ribosyl)-5-[(5-phospho-beta-D-ribosylamino)methylideneamino]imidazole-4-carboxamide. It participates in amino-acid biosynthesis; L-histidine biosynthesis; L-histidine from 5-phospho-alpha-D-ribose 1-diphosphate: step 3/9. In terms of biological role, catalyzes the hydrolysis of the adenine ring of phosphoribosyl-AMP. This Lactiplantibacillus plantarum (strain ATCC BAA-793 / NCIMB 8826 / WCFS1) (Lactobacillus plantarum) protein is Phosphoribosyl-AMP cyclohydrolase.